Here is a 277-residue protein sequence, read N- to C-terminus: Proteasome subunit beta type-7 (277 aa).

A propeptide spans 1–43 (MAAVSVFQPPVGGFSFDNCRRNAVLEADFAKKGFKLPKARKTG) (removed in mature form). Residue Thr44 is the Nucleophile of the active site.

Belongs to the peptidase T1B family. The 26S proteasome consists of a 20S proteasome core and two 19S regulatory subunits. The 20S proteasome core is a barrel-shaped complex made of 28 subunits that are arranged in four stacked rings. The two outer rings are each formed by seven alpha subunits, and the two inner rings are formed by seven beta subunits. The proteolytic activity is exerted by three beta-subunits PSMB5, PSMB6 and PSMB7.

It localises to the cytoplasm. The protein resides in the nucleus. It carries out the reaction Cleavage of peptide bonds with very broad specificity.. In terms of biological role, component of the 20S core proteasome complex involved in the proteolytic degradation of most intracellular proteins. This complex plays numerous essential roles within the cell by associating with different regulatory particles. Associated with two 19S regulatory particles, forms the 26S proteasome and thus participates in the ATP-dependent degradation of ubiquitinated proteins. The 26S proteasome plays a key role in the maintenance of protein homeostasis by removing misfolded or damaged proteins that could impair cellular functions, and by removing proteins whose functions are no longer required. Associated with the PA200 or PA28, the 20S proteasome mediates ubiquitin-independent protein degradation. This type of proteolysis is required in several pathways including spermatogenesis (20S-PA200 complex) or generation of a subset of MHC class I-presented antigenic peptides (20S-PA28 complex). Within the 20S core complex, PSMB7 displays a trypsin-like activity. This Mus musculus (Mouse) protein is Proteasome subunit beta type-7 (Psmb7).